A 462-amino-acid chain; its full sequence is Probable Xaa-Pro aminopeptidase NECHADRAFT_60613 (462 aa).

D259, D270, E393, and E433 together coordinate Mn(2+).

It belongs to the peptidase M24B family. It depends on Mn(2+) as a cofactor.

The enzyme catalyses Release of any N-terminal amino acid, including proline, that is linked to proline, even from a dipeptide or tripeptide.. Functionally, catalyzes the removal of a penultimate prolyl residue from the N-termini of peptides. This Fusarium vanettenii (strain ATCC MYA-4622 / CBS 123669 / FGSC 9596 / NRRL 45880 / 77-13-4) (Fusarium solani subsp. pisi) protein is Probable Xaa-Pro aminopeptidase NECHADRAFT_60613.